The primary structure comprises 237 residues: Purine nucleoside phosphorylase DeoD-type (237 aa).

Histidine 4 contacts a purine D-ribonucleoside. Phosphate is bound by residues glycine 20, arginine 24, arginine 43, and arginine 87–threonine 90. Residues glutamate 179–glutamate 181 and serine 203–aspartate 204 each bind a purine D-ribonucleoside. Aspartate 204 (proton donor) is an active-site residue.

This sequence belongs to the PNP/UDP phosphorylase family. In terms of assembly, homohexamer; trimer of homodimers.

It carries out the reaction a purine D-ribonucleoside + phosphate = a purine nucleobase + alpha-D-ribose 1-phosphate. The enzyme catalyses a purine 2'-deoxy-D-ribonucleoside + phosphate = a purine nucleobase + 2-deoxy-alpha-D-ribose 1-phosphate. Functionally, catalyzes the reversible phosphorolytic breakdown of the N-glycosidic bond in the beta-(deoxy)ribonucleoside molecules, with the formation of the corresponding free purine bases and pentose-1-phosphate. In Streptococcus gordonii (strain Challis / ATCC 35105 / BCRC 15272 / CH1 / DL1 / V288), this protein is Purine nucleoside phosphorylase DeoD-type.